The primary structure comprises 233 residues: Orotidine 5'-phosphate decarboxylase (233 aa).

Substrate is bound by residues Asp-11, Lys-33, 60–69, Thr-120, Arg-181, Gln-190, Gly-210, and Arg-211; that span reads DLKFHDIPNT. The Proton donor role is filled by Lys-62.

This sequence belongs to the OMP decarboxylase family. Type 1 subfamily. In terms of assembly, homodimer.

The catalysed reaction is orotidine 5'-phosphate + H(+) = UMP + CO2. Its pathway is pyrimidine metabolism; UMP biosynthesis via de novo pathway; UMP from orotate: step 2/2. Catalyzes the decarboxylation of orotidine 5'-monophosphate (OMP) to uridine 5'-monophosphate (UMP). The chain is Orotidine 5'-phosphate decarboxylase from Vibrio campbellii (strain ATCC BAA-1116).